A 386-amino-acid polypeptide reads, in one-letter code: Homeobox protein Hox-A13 (386 aa).

A DNA-binding region (homeobox) is located at residues 320–379 (GRKKRVPYTKVQLKELEREYATNKFITKDKRRRISATTNLSERQVTIWFQNRRVKEKKVI).

The protein belongs to the Abd-B homeobox family. Binds DNA as a homodimer. Interacts with MEIS1, MEIS2 and MEIS3.

It is found in the nucleus. Functionally, sequence-specific, AT-rich binding transcription factor which is part of a developmental regulatory system that provides cells with specific positional identities on the anterior-posterior axis. The chain is Homeobox protein Hox-A13 (Hoxa13) from Mus musculus (Mouse).